We begin with the raw amino-acid sequence, 306 residues long: Putative syntaxin-3 (306 aa).

The Cytoplasmic segment spans residues 1–279 (MPRDRLKELQ…QKRARKMKVC (279 aa)). A required for the regulation of the defecation motor program region spans residues 40 to 180 (QDADFEMFLE…QLSDEEIENA (141 aa)). The 63-residue stretch at 204-266 (YDEVKSRADE…KQARGNVEEA (63 aa)) folds into the t-SNARE coiled-coil homology domain. The helical; Anchor for type IV membrane protein transmembrane segment at 280 to 300 (IIIGSIIAVLILILFIQSAVC) threads the bilayer. At 301–306 (HFTPIC) the chain is on the extracellular side.

Belongs to the syntaxin family. As to expression, expressed in body wall, pharyngeal, vulval and enteric muscles and in some head neurons.

It localises to the cell membrane. Functionally, potentially involved in docking of synaptic vesicles at presynaptic active zones. Acts in the intestine to regulate anterior body muscle contractions (aBOC) and the expulsion steps during the defecation motor program (DMP). This is Putative syntaxin-3 from Caenorhabditis elegans.